The sequence spans 237 residues: BTB/POZ domain-containing protein KCTD6 (237 aa).

Residues His-12–Val-81 form the BTB domain.

In terms of assembly, homopentamer. May be part of a cullin-containing E3 ubiquitin-protein ligase complex.

It participates in protein modification; protein ubiquitination. Probable substrate-specific adapter of a cullin-containing E3 ubiquitin-protein ligase complex mediating the ubiquitination and subsequent proteasomal degradation of target proteins. The chain is BTB/POZ domain-containing protein KCTD6 (kctd6) from Danio rerio (Zebrafish).